The chain runs to 344 residues: uncharacterized protein (344 aa).

Residues 242–343 (RGITALVRSK…GVAPSEYSRR (102 aa)) form the HTH araC/xylS-type domain. 2 DNA-binding regions (H-T-H motif) span residues 263 to 284 (TDVA…AEEG) and 310 to 333 (VQQV…KRWY).

This is an uncharacterized protein from Mycobacterium bovis (strain ATCC BAA-935 / AF2122/97).